Consider the following 424-residue polypeptide: Alkaline nuclease (424 aa).

The protein belongs to the baculo-herpesviridae alkaline nuclease family. Interacts with LEF-3.

The protein localises to the host nucleus. In terms of biological role, may play a role in maturation and encapsidation of viral replicated genome, by promoting DNA homologous recombination. Exhibits endonuclease and 5'-&gt;3' exonuclease activities. The endonuclease activity displays a specificity for ssDNA in vitro. The sequence is that of Alkaline nuclease (ALK-EXO) from Orgyia pseudotsugata (Douglas-fir tussock moth).